A 524-amino-acid polypeptide reads, in one-letter code: Glycoprotein (524 aa).

A signal peptide spans 1-19; the sequence is MVPQALLLVPILGFSSCFG. At 20–459 the chain is on the virion surface side; the sequence is KFPIYTIPDT…DLGLPNWGEY (440 aa). 6 disulfides stabilise this stretch: Cys43–Cys302, Cys54–Cys226, Cys80–Cys113, Cys178–Cys188, Cys208–Cys247, and Cys242–Cys271. Asn56 is a glycosylation site (N-linked (GlcNAc...) asparagine; by host). Residues Asn266 and Asn338 are each glycosylated (N-linked (GlcNAc...) asparagine; by host). Cysteines 363 and 370 form a disulfide. The helical transmembrane segment at 460 to 480 threads the bilayer; it reads VLLSAGTLIALMLIIFLMTCC. Cys480 carries the S-palmitoyl cysteine; by host lipid modification. Residues 481–524 lie on the Intravirion side of the membrane; that stretch reads RKVDRPESTQRSLRGTGRNVSVTSQSGKFIPSWESYKSGGETGL.

It belongs to the lyssavirus glycoprotein family. As to quaternary structure, homotrimer. Interacts with matrix protein. Interacts with host TRFC. Interacts with host BST2; this interaction inhibits viral budding by tethering new virions to the cell surface. Interacts with ITGB1. Interacts with host GRM2. In terms of processing, glycosylated and palmitoylated by host. Glycosylation is crucial for glycoprotein export at the cell surface.

Its subcellular location is the virion membrane. Functionally, attaches the virus to host cellular receptor, inducing endocytosis of the virion by using different host proteins including TFRC, GRM2 and ITGB1. In the endosome, the acidic pH induces conformational changes in the glycoprotein trimer, which trigger fusion between virus and cell membrane. There is convincing in vitro evidence that the muscular form of the nicotinic acetylcholine receptor (nAChR), the neuronal cell adhesion molecule (NCAM), and the p75 neurotrophin receptor (p75NTR) bind glycoprotein and thereby facilitate rabies virus entry into cells. This Rabies virus (strain Nishigahara RCEH) (RABV) protein is Glycoprotein (G).